The primary structure comprises 324 residues: MTLTKETRVTLNDGNMMPILGLGTYAAPDVPKSLAEEAVKTAIDVGYRHIDCAFITGNEMHIGNGIRSKISDGTVKREDIFYTGKLWCTYFSPDMVRKGLERSLRDVGMDYLDLFLMHWPVSLKPSGASDPSDKDKPFIYDNVDLCATWEALEARKDAGLVRSLGVSNFNRRQLERILNKPGLKYKPVCNQVECHVYLNQNKLHSYCKSKDIVLVTYSVLGSHRDRNWVDLSLPVLLDDPILNKIAAKYNRTSAEVAMRFILQKGIVVLAKSFTPARIKQNLGVFEFELKPEDMKTLESLDRNLHYGPFREVKQHPEYPFHDEY.

Residue Thr-2 is modified to N-acetylthreonine. 218–281 (SVLGSHRDRN…SFTPARIKQN (64 aa)) contacts NADP(+).

The protein belongs to the aldo/keto reductase family. Monomer.

This chain is Rho crystallin, found in Aquarana catesbeiana (American bullfrog).